The chain runs to 197 residues: MSERIAEVSRDTLETQIRVRINLDGQGKGQFDTGLPFLDHMLDQVARHGVVDLEIVAKGDLHIDAHHTVEDIGITLGQAMARALGDKKGIRRYGHAYVPLDEALSRVVVDFSGRPGLEYHVDYPRARIGDFDVDLFGEFFQGFVNHAAVTLHIDNLRGRNAHHVAETIFKAFGRALRMAAEPDPRMQGTTPSTKGSL.

This sequence belongs to the imidazoleglycerol-phosphate dehydratase family.

It is found in the cytoplasm. The enzyme catalyses D-erythro-1-(imidazol-4-yl)glycerol 3-phosphate = 3-(imidazol-4-yl)-2-oxopropyl phosphate + H2O. It functions in the pathway amino-acid biosynthesis; L-histidine biosynthesis; L-histidine from 5-phospho-alpha-D-ribose 1-diphosphate: step 6/9. The chain is Imidazoleglycerol-phosphate dehydratase from Thioalkalivibrio sulfidiphilus (strain HL-EbGR7).